We begin with the raw amino-acid sequence, 548 residues long: ATP synthase subunit alpha (548 aa).

Gly172–Thr179 provides a ligand contact to ATP. The interval Ala526–Lys548 is disordered.

Belongs to the ATPase alpha/beta chains family. In terms of assembly, F-type ATPases have 2 components, CF(1) - the catalytic core - and CF(0) - the membrane proton channel. CF(1) has five subunits: alpha(3), beta(3), gamma(1), delta(1), epsilon(1). CF(0) has three main subunits: a(1), b(2) and c(9-12). The alpha and beta chains form an alternating ring which encloses part of the gamma chain. CF(1) is attached to CF(0) by a central stalk formed by the gamma and epsilon chains, while a peripheral stalk is formed by the delta and b chains.

Its subcellular location is the cell membrane. The enzyme catalyses ATP + H2O + 4 H(+)(in) = ADP + phosphate + 5 H(+)(out). In terms of biological role, produces ATP from ADP in the presence of a proton gradient across the membrane. The alpha chain is a regulatory subunit. The polypeptide is ATP synthase subunit alpha (Mycolicibacterium gilvum (strain PYR-GCK) (Mycobacterium gilvum (strain PYR-GCK))).